A 618-amino-acid polypeptide reads, in one-letter code: Elongation factor 4 (618 aa).

A tr-type G domain is found at 17-198 (AIIRNFCIIA…KIVRDLPAPE (182 aa)). Residues 29–34 (DHGKST) and 145–148 (NKID) contribute to the GTP site.

This sequence belongs to the TRAFAC class translation factor GTPase superfamily. Classic translation factor GTPase family. LepA subfamily.

It localises to the cell membrane. The catalysed reaction is GTP + H2O = GDP + phosphate + H(+). Its function is as follows. Required for accurate and efficient protein synthesis under certain stress conditions. May act as a fidelity factor of the translation reaction, by catalyzing a one-codon backward translocation of tRNAs on improperly translocated ribosomes. Back-translocation proceeds from a post-translocation (POST) complex to a pre-translocation (PRE) complex, thus giving elongation factor G a second chance to translocate the tRNAs correctly. Binds to ribosomes in a GTP-dependent manner. This Pseudarthrobacter chlorophenolicus (strain ATCC 700700 / DSM 12829 / CIP 107037 / JCM 12360 / KCTC 9906 / NCIMB 13794 / A6) (Arthrobacter chlorophenolicus) protein is Elongation factor 4.